We begin with the raw amino-acid sequence, 397 residues long: 2,3-bisphosphoglycerate-independent phosphoglycerate mutase (397 aa).

It belongs to the BPG-independent phosphoglycerate mutase family. A-PGAM subfamily.

The enzyme catalyses (2R)-2-phosphoglycerate = (2R)-3-phosphoglycerate. Its pathway is carbohydrate degradation; glycolysis; pyruvate from D-glyceraldehyde 3-phosphate: step 3/5. Its function is as follows. Catalyzes the interconversion of 2-phosphoglycerate and 3-phosphoglycerate. The chain is 2,3-bisphosphoglycerate-independent phosphoglycerate mutase (apgM) from Methanosarcina mazei (strain ATCC BAA-159 / DSM 3647 / Goe1 / Go1 / JCM 11833 / OCM 88) (Methanosarcina frisia).